Here is a 703-residue protein sequence, read N- to C-terminus: Zinc finger protein 750 (703 aa).

A CCHC-type zinc finger spans residues 25 to 51 (YKCFQCPFTCNEKSHLFNHMKYGLCKN). The Zn(2+) site is built by Cys-27, Cys-30, His-43, and Cys-49. Disordered regions lie at residues 64-113 (KCPK…DAKE), 350-527 (PASS…YGPM), 553-614 (WAPR…KQTA), and 630-703 (RVAD…TRVS). Residues 67 to 106 (KSSSLDPKQTHQPEPTSKPATSKSLLNGLSSFDPKSQQGS) are compositionally biased toward polar residues. Over residues 352–361 (SSPSELNLSS) the composition is skewed to low complexity. The segment covering 367–394 (TECEKGSPVPEAKDPSKDGQRDAEEAKM) has biased composition (basic and acidic residues). 2 stretches are compositionally biased toward polar residues: residues 410–421 (SPTNFTQTSQTF) and 456–477 (GSESPHSQPPANRTESPKSLQA). The segment covering 574 to 611 (TETKGSEDRTSRVETPQDKAHSRTTPDVHTEDSSDEQK) has biased composition (basic and acidic residues). Positions 639-655 (QEPTRQDVPTLSATENL) are enriched in polar residues.

Its subcellular location is the nucleus. Its function is as follows. Transcription factor involved in epidermis differentiation. Required for terminal epidermal differentiation: acts downstream of p63/TP63 and activates expression of late epidermal differentiation genes. Specifically binds to the promoter of KLF4 and promotes its expression. This chain is Zinc finger protein 750 (Znf750), found in Mus musculus (Mouse).